The sequence spans 261 residues: Probable 6-phosphogluconolactonase 4 (261 aa).

The protein belongs to the glucosamine/galactosamine-6-phosphate isomerase family. 6-phosphogluconolactonase subfamily.

It localises to the cytoplasm. Its subcellular location is the cytosol. It catalyses the reaction 6-phospho-D-glucono-1,5-lactone + H2O = 6-phospho-D-gluconate + H(+). It functions in the pathway carbohydrate degradation; pentose phosphate pathway; D-ribulose 5-phosphate from D-glucose 6-phosphate (oxidative stage): step 2/3. Catalyzes the hydrolysis of 6-phosphogluconolactone to 6-phosphogluconate. This chain is Probable 6-phosphogluconolactonase 4, found in Arabidopsis thaliana (Mouse-ear cress).